The sequence spans 124 residues: Large ribosomal subunit protein eL22y (124 aa).

This sequence belongs to the eukaryotic ribosomal protein eL22 family.

The polypeptide is Large ribosomal subunit protein eL22y (RPL22C) (Arabidopsis thaliana (Mouse-ear cress)).